The chain runs to 340 residues: Phosphate acyltransferase (340 aa).

Residues 285 to 340 (WRQSGRPARHRGQEPRRHRQPRFWLCHRRGRRRSPRQRNRTHPGTGQPPAGCAGAR) are disordered. Basic residues predominate over residues 300 to 325 (RRHRQPRFWLCHRRGRRRSPRQRNRT).

It belongs to the PlsX family. As to quaternary structure, homodimer. Probably interacts with PlsY.

The protein localises to the cytoplasm. It carries out the reaction a fatty acyl-[ACP] + phosphate = an acyl phosphate + holo-[ACP]. Its pathway is lipid metabolism; phospholipid metabolism. In terms of biological role, catalyzes the reversible formation of acyl-phosphate (acyl-PO(4)) from acyl-[acyl-carrier-protein] (acyl-ACP). This enzyme utilizes acyl-ACP as fatty acyl donor, but not acyl-CoA. The protein is Phosphate acyltransferase of Laribacter hongkongensis (strain HLHK9).